Consider the following 475-residue polypeptide: Polyphosphate:AMP phosphotransferase (475 aa).

PPK2 stretches follow at residues 18–222 (LDLI…LTAL) and 256–472 (ANYK…KADR).

The protein belongs to the polyphosphate kinase 2 (PPK2) family. Class II subfamily. Homodimer and homotetramer. Mg(2+) is required as a cofactor.

It catalyses the reaction [phosphate](n) + ADP = [phosphate](n+1) + AMP. Functionally, uses inorganic polyphosphate (polyP) as a donor to convert AMP to ADP. Can also use GMP, UMP, CMP, TMP or deoxyribonucleoside monophosphates, with lower efficiency. Cannot use low-molecular weight polyP as donors. Can also catalyze the synthesis of polyP from ADP or GDP, with lower efficiency. The sequence is that of Polyphosphate:AMP phosphotransferase from Acinetobacter johnsonii.